Here is a 38-residue protein sequence, read N- to C-terminus: RapG inhibitor (38 aa).

Residues 1–33 (MKRFLIGAGVAAVILSGWFIADHQTHSQEMKVA) constitute a propeptide that is removed on maturation.

It belongs to the Phr family. Contains a predicted signal peptide cleavage site in the N-terminal region, however the propeptide is probably subject to only one processing event, at the N-terminal end of the mature peptide.

It localises to the secreted. The protein localises to the cytoplasm. Signaling molecule involved in the regulation of expression of DegU-controlled genes. Secreted during production, but the mature peptide acts intracellularly, indicating that it needs to be imported into the cell to function. Stimulates the DegU-dependent expression of aprE, an extracellular alkaline protease. Acts by inhibiting RapG activity. At high concentrations, represses the DegS-dependent aprE expression. The polypeptide is RapG inhibitor (phrG) (Bacillus subtilis (strain 168)).